Reading from the N-terminus, the 394-residue chain is D-mannose isomerase (394 aa).

Catalysis depends on proton donor/acceptor residues H251 and H380.

Belongs to the N-acylglucosamine 2-epimerase family. In terms of assembly, monomer.

The catalysed reaction is D-mannose = D-fructose. The enzyme catalyses D-lyxose = D-xylulose. Catalyzes the reversible isomerization of D-mannose to D-fructose. Can also isomerize D-lyxose, with lower efficiency. In longer reaction with a higher concentration of enzyme, it can isomerize 4-OH D-mannose derivatives (D-talose and 4-O-monosaccharyl-D-mannose). Cannot use D-glucose. This Marinomonas mediterranea (strain ATCC 700492 / JCM 21426 / NBRC 103028 / MMB-1) protein is D-mannose isomerase.